The primary structure comprises 489 residues: L-asparagine permease 1 (489 aa).

The next 12 membrane-spanning stretches (helical) occupy residues 25–45, 49–69, 100–120, 137–157, 162–182, 210–230, 255–275, 289–309, 344–364, 369–389, 413–433, and 439–459; these read QLQMIGIGGAIGTGLFLGASG, KAGPGLFLVYGVCGVFVFLIL, AVGWMYFLHWAMTSIVDTTAI, ILALIALTVVLSMNLISVEWF, FWAALIKVLALMAFLVVGTVF, WLPLLIVTSGVVFAYSAVELV, IAIFYVGSVALLALLLPYTAY, IGFHGAGDLMNIVVLTAALSS, YGGIVLTAVITLFGVALNAFK, FEIVLNMSALGIIAGWATIVL, SPYSGYLTLLFLLVVLVTMAS, and TWTVATLIIVIPALTAGWYLV.

Belongs to the amino acid-polyamine-organocation (APC) superfamily. Amino acid transporter (AAT) (TC 2.A.3.1) family.

It is found in the cell membrane. The sequence is that of L-asparagine permease 1 (ansP1) from Mycobacterium bovis (strain ATCC BAA-935 / AF2122/97).